The chain runs to 353 residues: Guanine nucleotide-binding protein alpha-1 subunit (353 aa).

A disordered region spans residues 1–26 (MGCGMSTEEKEGKARNEEIENQLKRD). G2 is lipidated: N-myristoyl glycine. C3 carries the S-palmitoyl cysteine lipid modification. The segment covering 7–26 (TEEKEGKARNEEIENQLKRD) has biased composition (basic and acidic residues). One can recognise a G-alpha domain in the interval 32-353 (NEIKMLLLGA…QENLRLCGLI (322 aa)). Positions 35-48 (KMLLLGAGESGKST) are G1 motif. The GTP site is built by E43, S44, G45, K46, S47, T48, D150, L175, T181, G203, N269, K270, D272, and A325. Residue S47 coordinates Mg(2+). The segment at 173–181 (DVLRSRVKT) is G2 motif. T181 contacts Mg(2+). The segment at 196–205 (YRMFDVGGQR) is G3 motif. Residues 265–272 (ILFLNKID) form a G4 motif region. Positions 323–328 (TCATDT) are G5 motif.

It belongs to the G-alpha family. G(q) subfamily. In terms of assembly, g proteins are composed of 3 units; alpha, beta and gamma. The alpha chain contains the guanine nucleotide binding site. Mg(2+) is required as a cofactor.

In terms of biological role, guanine nucleotide-binding proteins (G proteins) are involved as modulators or transducers in various transmembrane signaling systems. The chain is Guanine nucleotide-binding protein alpha-1 subunit (gna-1) from Neurospora crassa (strain ATCC 24698 / 74-OR23-1A / CBS 708.71 / DSM 1257 / FGSC 987).